The primary structure comprises 368 residues: Phosphate acyltransferase (368 aa).

The protein belongs to the PlsX family. In terms of assembly, homodimer. Probably interacts with PlsY.

It is found in the cytoplasm. It catalyses the reaction a fatty acyl-[ACP] + phosphate = an acyl phosphate + holo-[ACP]. Its pathway is lipid metabolism; phospholipid metabolism. Its function is as follows. Catalyzes the reversible formation of acyl-phosphate (acyl-PO(4)) from acyl-[acyl-carrier-protein] (acyl-ACP). This enzyme utilizes acyl-ACP as fatty acyl donor, but not acyl-CoA. The protein is Phosphate acyltransferase of Herpetosiphon aurantiacus (strain ATCC 23779 / DSM 785 / 114-95).